Reading from the N-terminus, the 252-residue chain is 5-oxoprolinase subunit A (252 aa).

The protein belongs to the LamB/PxpA family. In terms of assembly, forms a complex composed of PxpA, PxpB and PxpC.

The catalysed reaction is 5-oxo-L-proline + ATP + 2 H2O = L-glutamate + ADP + phosphate + H(+). In terms of biological role, catalyzes the cleavage of 5-oxoproline to form L-glutamate coupled to the hydrolysis of ATP to ADP and inorganic phosphate. This chain is 5-oxoprolinase subunit A, found in Kocuria rhizophila (strain ATCC 9341 / DSM 348 / NBRC 103217 / DC2201).